Here is a 90-residue protein sequence, read N- to C-terminus: DNA-directed RNA polymerase subunit omega (90 aa).

It belongs to the RNA polymerase subunit omega family. In terms of assembly, the RNAP catalytic core consists of 2 alpha, 1 beta, 1 beta' and 1 omega subunit. When a sigma factor is associated with the core the holoenzyme is formed, which can initiate transcription.

The enzyme catalyses RNA(n) + a ribonucleoside 5'-triphosphate = RNA(n+1) + diphosphate. Functionally, promotes RNA polymerase assembly. Latches the N- and C-terminal regions of the beta' subunit thereby facilitating its interaction with the beta and alpha subunits. The polypeptide is DNA-directed RNA polymerase subunit omega (Histophilus somni (strain 129Pt) (Haemophilus somnus)).